A 1148-amino-acid polypeptide reads, in one-letter code: Replication factor C subunit 1 (1148 aa).

Basic and acidic residues predominate over residues 46–56 (NSSRKEDDFKQ). 2 disordered regions span residues 46 to 201 (NSSR…LNDE) and 228 to 380 (TLAM…TNYQ). Residue Lys50 forms a Glycyl lysine isopeptide (Lys-Gly) (interchain with G-Cter in SUMO2) linkage. Tyr67 carries the post-translational modification Phosphotyrosine. Phosphoserine occurs at positions 69, 71, 73, and 108. Phosphothreonine is present on Thr110. Polar residues predominate over residues 130–141 (RSTNSHLGTSNM). Ser156 carries the phosphoserine modification. Residues Thr161 and Thr163 each carry the phosphothreonine modification. Ser164, Ser173, and Ser190 each carry phosphoserine. Over residues 234–246 (EEPKTKKARKDTE) the composition is skewed to basic and acidic residues. Residue Ser253 is modified to Phosphoserine. Over residues 262-271 (EKHKYPHKVK) the composition is skewed to basic residues. Phosphoserine is present on residues Ser281 and Ser283. Over residues 288-308 (SKYESSKESQQHSKSSADKIG) the composition is skewed to basic and acidic residues. A Phosphoserine modification is found at Ser312. Composition is skewed to basic and acidic residues over residues 323–353 (KRKE…ETKT) and 362–376 (AKKE…EKKR). Phosphoserine is present on Ser368. Residues 402 to 492 (GAENCLEGLI…PGKKSKYEIA (91 aa)) enclose the BRCT domain. 2 stretches are compositionally biased toward basic and acidic residues: residues 496-507 (EMKKESKLERTP) and 520-538 (SKKE…RDSL). The segment at 496–538 (EMKKESKLERTPQKNVQGKRKISPSKKESESKKSRPTSKRDSL) is disordered. Ser537 is subject to Phosphoserine. 650 to 657 (SGPPGVGK) contributes to the ATP binding site. The tract at residues 1081–1148 (KASRHSTSPS…RKGKGKSSKK (68 aa)) is disordered. The span at 1094-1105 (EYNEELNEDDSQ) shows a compositional bias: acidic residues. Ser1104 and Ser1106 each carry phosphoserine. The Nuclear localization signal signature appears at 1120–1124 (IKKKT). Basic and acidic residues predominate over residues 1130-1140 (SKPEKDKEPRK).

This sequence belongs to the activator 1 large subunit family. As to quaternary structure, large subunit of the RFC complex, an heteropentameric complex consisting of RFC1 and four small subunits RFC2, RFC3, RFC4 and RFC5; the RFC complex interacts with PCNA and the interaction involves RFC1. In terms of tissue distribution, wide tissue distribution. Undetectable in placental tissue.

It localises to the nucleus. Functionally, subunit of the replication factor C (RFC) complex which acts during elongation of primed DNA templates by DNA polymerases delta and epsilon, and is necessary for ATP-dependent loading of proliferating cell nuclear antigen (PCNA) onto primed DNA. This subunit binds to the primer-template junction. Binds the PO-B transcription element as well as other GA rich DNA sequences. Can bind single- or double-stranded DNA. This is Replication factor C subunit 1 (RFC1) from Homo sapiens (Human).